Here is a 242-residue protein sequence, read N- to C-terminus: Probable transcriptional regulatory protein BTH_I1015 (242 aa).

This sequence belongs to the TACO1 family.

It is found in the cytoplasm. This is Probable transcriptional regulatory protein BTH_I1015 from Burkholderia thailandensis (strain ATCC 700388 / DSM 13276 / CCUG 48851 / CIP 106301 / E264).